Consider the following 405-residue polypeptide: L-rhamnonate dehydratase (405 aa).

Substrate-binding residues include His33 and Arg59. Mg(2+) is bound by residues Asp226, Glu252, and Glu280. His329 serves as the catalytic Proton acceptor. Glu349 provides a ligand contact to substrate.

Belongs to the mandelate racemase/muconate lactonizing enzyme family. RhamD subfamily. Homooctamer; tetramer of dimers. Mg(2+) serves as cofactor.

The enzyme catalyses L-rhamnonate = 2-dehydro-3-deoxy-L-rhamnonate + H2O. Catalyzes the dehydration of L-rhamnonate to 2-keto-3-deoxy-L-rhamnonate (KDR). In Escherichia coli (strain K12 / DH10B), this protein is L-rhamnonate dehydratase.